Reading from the N-terminus, the 635-residue chain is Cerevisin (635 aa).

Positions M1 to A19 are cleaved as a signal peptide. Positions L20–T280 are excised as a propeptide. Composition is skewed to basic and acidic residues over residues I35–T50, K74–G85, S94–S109, and G126–K136. Positions I35–G155 are disordered. Residues M137–G155 are compositionally biased toward basic residues. Residues R182–E278 form the Inhibitor I9 domain. A Peptidase S8 domain is found at P289–I614. Catalysis depends on charge relay system residues D325 and H357. An intrachain disulfide couples C460 to C491. S519 (charge relay system) is an active-site residue. The propeptide occupies D575–I635. N594 carries N-linked (GlcNAc...) asparagine glycosylation.

This sequence belongs to the peptidase S8 family. Post-translationally, activated by N- and C-terminal proteolytic cleavage. Protease B (PrB/PRB1) processing requires at least 4 cleavages. First, the signal peptide is removed from the 76 kDa preproprotease B by signal peptidase in the ER. Then, PrB removes its own Pro-region (in trans) at the N-terminus, producing a 39 kDa form before exiting the ER. In the Golgi complex, the C-terminal Post-region of the 40 kDa proprotease B undergoes protease A (PrA/PEP4)-mediated processing to a 37 kDa intermediate, which in turn is quickly processed again by PrB in trans to yield the 31 kDa mature PrB. In terms of processing, glycosylated. Preproprotease B is a 76 kDa unglycosylated precursor that enters the endoplasmic reticulum (ER), where it receives one Asn-linked and an undetermined number of non-Asn-linked carbohydrate side chains. In the Golgi complex, the 39 kDa form becomes 40 kDa, due to elaboration of the Asn-linked side chain. The ultimate processing step removes a peptide containing the Asn-linked chain. Mature PrB has only non-Asn-linked carbohydrates.

Its subcellular location is the vacuole. The catalysed reaction is Hydrolysis of proteins with broad specificity, and of Bz-Arg-OEt &gt; Ac-Tyr-OEt. Does not hydrolyze peptide amides.. In terms of biological role, vacuolar proteinase B involved in protein degradation in the vacuole. Among other substrates, acts on carboxypeptidase Y (cpY/PRC1) to activate it by processing its Pro-peptide. Required for meiosis and spore formation, and for optimal survival in stationary phase. This is Cerevisin (PRB1) from Saccharomyces cerevisiae (strain ATCC 204508 / S288c) (Baker's yeast).